Here is a 283-residue protein sequence, read N- to C-terminus: NFU1 iron-sulfur cluster scaffold homolog, mitochondrial (283 aa).

The transit peptide at 1–65 directs the protein to the mitochondrion; sequence MSKFLSQAAI…ELRMPVACRR (65 aa). The nifU stretch occupies residues 182-250; it reads IKELLDTRIR…IPEVESVEQV (69 aa). 2 residues coordinate [4Fe-4S] cluster: C219 and C222.

This sequence belongs to the NifU family.

It is found in the mitochondrion. Molecular scaffold for [Fe-S] cluster assembly of mitochondrial iron-sulfur proteins. This Drosophila simulans (Fruit fly) protein is NFU1 iron-sulfur cluster scaffold homolog, mitochondrial.